Here is a 155-residue protein sequence, read N- to C-terminus: MQLNTRQARIFKLANLLGTGKPVSAADIITSLECSEPTLTRALKELRESYSAEIKYSKAGHSYHLVNPGQLDKKTLRRMNEALAQNAELKTGESTGKVVLDKDKKTAVSLSLRMRILRKIDRLAALSGSTRSEAVEKLALHSVDELIKEYSAKKS.

In terms of biological role, involved in tellurite resistance. TerW binds specifically to the potential promoter region of the terZABCDE operon and probably regulates expression of the genes. This chain is Probable tellurium resistance transcriptional regulator TerW, found in Escherichia coli.